Consider the following 393-residue polypeptide: High mobility group protein DSP1 (393 aa).

The tract at residues 153–179 is disordered; sequence QMQQQQQQQNVINSASPMSRVKADAKP. 2 consecutive DNA-binding regions (HMG box) follow at residues 179-249 and 271-339; these read PRGR…QNYV and PKRS…TEYK. Over residues 364–374 the composition is skewed to low complexity; sequence LLAAAAQQQHQ. The tract at residues 364 to 393 is disordered; that stretch reads LLAAAAQQQHQQLEEQHDDDDGDGDDDENQ. A compositionally biased stretch (acidic residues) spans 379–393; it reads QHDDDDGDGDDDENQ.

The protein belongs to the HMGB family.

It is found in the nucleus. The protein localises to the chromosome. Functionally, binds preferentially single-stranded DNA and unwinds double-stranded DNA. The chain is High mobility group protein DSP1 (Dsp1) from Drosophila melanogaster (Fruit fly).